Consider the following 217-residue polypeptide: ATP phosphoribosyltransferase (217 aa).

The protein belongs to the ATP phosphoribosyltransferase family. Short subfamily. Heteromultimer composed of HisG and HisZ subunits.

The protein localises to the cytoplasm. It catalyses the reaction 1-(5-phospho-beta-D-ribosyl)-ATP + diphosphate = 5-phospho-alpha-D-ribose 1-diphosphate + ATP. It functions in the pathway amino-acid biosynthesis; L-histidine biosynthesis; L-histidine from 5-phospho-alpha-D-ribose 1-diphosphate: step 1/9. In terms of biological role, catalyzes the condensation of ATP and 5-phosphoribose 1-diphosphate to form N'-(5'-phosphoribosyl)-ATP (PR-ATP). Has a crucial role in the pathway because the rate of histidine biosynthesis seems to be controlled primarily by regulation of HisG enzymatic activity. The sequence is that of ATP phosphoribosyltransferase from Burkholderia orbicola (strain AU 1054).